The primary structure comprises 214 residues: EEF1A lysine methyltransferase 1 (214 aa).

Position 2 is an N-acetylserine (Ser2). Ser2 is subject to Phosphoserine.

The protein belongs to the class I-like SAM-binding methyltransferase superfamily. EFM5 family.

It localises to the cytoplasm. The catalysed reaction is L-lysyl-[protein] + 3 S-adenosyl-L-methionine = N(6),N(6),N(6)-trimethyl-L-lysyl-[protein] + 3 S-adenosyl-L-homocysteine + 3 H(+). In terms of biological role, protein-lysine methyltransferase that selectively catalyzes the trimethylation of EEF1A at 'Lys-79'. The protein is EEF1A lysine methyltransferase 1 of Mus musculus (Mouse).